Consider the following 330-residue polypeptide: Glycerol-3-phosphate dehydrogenase [NAD(P)+] (330 aa).

4 residues coordinate NADPH: Ser-10, Trp-11, Arg-31, and Lys-105. Sn-glycerol 3-phosphate contacts are provided by Lys-105, Gly-135, and Ser-137. Ala-139 provides a ligand contact to NADPH. Positions 190, 243, 253, 254, and 255 each coordinate sn-glycerol 3-phosphate. The active-site Proton acceptor is the Lys-190. Residue Arg-254 coordinates NADPH. Positions 278 and 280 each coordinate NADPH.

Belongs to the NAD-dependent glycerol-3-phosphate dehydrogenase family.

It localises to the cytoplasm. The enzyme catalyses sn-glycerol 3-phosphate + NAD(+) = dihydroxyacetone phosphate + NADH + H(+). It catalyses the reaction sn-glycerol 3-phosphate + NADP(+) = dihydroxyacetone phosphate + NADPH + H(+). Its pathway is membrane lipid metabolism; glycerophospholipid metabolism. In terms of biological role, catalyzes the reduction of the glycolytic intermediate dihydroxyacetone phosphate (DHAP) to sn-glycerol 3-phosphate (G3P), the key precursor for phospholipid synthesis. The sequence is that of Glycerol-3-phosphate dehydrogenase [NAD(P)+] from Oleidesulfovibrio alaskensis (strain ATCC BAA-1058 / DSM 17464 / G20) (Desulfovibrio alaskensis).